A 161-amino-acid polypeptide reads, in one-letter code: Allophycocyanin alpha chain (161 aa).

Asn71 is modified (N4-methylasparagine). Cys81 provides a ligand contact to (2R,3E)-phycocyanobilin.

The protein belongs to the phycobiliprotein family. In terms of assembly, heterodimer of an alpha and a beta chain. Contains one covalently linked phycocyanobilin chromophore.

It is found in the plastid. The protein localises to the chloroplast thylakoid membrane. Light-harvesting photosynthetic bile pigment-protein from the phycobiliprotein complex. Allophycocyanin has a maximum absorption at approximately 650 nanometers. The polypeptide is Allophycocyanin alpha chain (apcA) (Cyanidium caldarium (Red alga)).